The chain runs to 163 residues: Adenosine 5'-monophosphoramidase HINT2 (163 aa).

Residues 1–17 (MAAAVLLAVGLRAARRT) constitute a mitochondrion transit peptide. An N6-succinyllysine modification is found at Lys45. The 109-residue stretch at 55–163 (IFSRILDRSL…GGRQLQWPPG (109 aa)) folds into the HIT domain. 2 residues coordinate AMP: Ser63 and Asp80. The residue at position 119 (Lys119) is an N6-acetyllysine. Lys128 carries the N6-acetyllysine; alternate modification. Lys128 is subject to N6-succinyllysine; alternate. Asn136 contributes to the AMP binding site. Lys139 is modified (N6-acetyllysine). AMP-binding positions include 142-145 (AQSV) and 149-151 (HIH). The Histidine triad motif signature appears at 147-151 (HLHIH). His149 acts as the Tele-AMP-histidine intermediate in catalysis.

This sequence belongs to the HINT family.

It is found in the mitochondrion. The catalysed reaction is adenosine 5'-phosphoramidate + H2O = AMP + NH4(+). Exhibits adenosine 5'-monophosphoramidase activity, hydrolyzing purine nucleotide phosphoramidates with a single phosphate group such as adenosine 5'monophosphoramidate (AMP-NH2) to yield AMP and NH2. Hydrolyzes adenosine 5'-O-p-nitrophenylphosphoramidate (AMP-pNA). May be involved in steroid biosynthesis. May play a role in apoptosis. The protein is Adenosine 5'-monophosphoramidase HINT2 of Mus musculus (Mouse).